The sequence spans 798 residues: Nuclear cap-binding protein subunit 1 (798 aa).

Residues 28–241 enclose the MIF4G domain; sequence EKKLQGVIGK…SLSAQIEALR (214 aa). The segment at 663 to 686 is disordered; that stretch reads NKIKEEDDEESDIKMDEDETKEEK. Residues 668–682 show a composition bias toward acidic residues; the sequence is EDDEESDIKMDEDET.

It belongs to the NCBP1 family. As to quaternary structure, component of the nuclear cap-binding complex (CBC), a heterodimer composed of ncbp-1 and ncbp-1 that interacts with m7GpppG-capped RNA.

Its subcellular location is the nucleus. Its function is as follows. Component of the cap-binding complex (CBC), which binds cotranscriptionally to the 5'-cap of pre-mRNAs and is involved in various processes such as pre-mRNA splicing and RNA-mediated gene silencing (RNAi). The CBC complex is involved in miRNA-mediated RNA interference and is required for primary microRNAs (miRNAs) processing. In the CBC complex, ncbp-1 does not bind directly capped RNAs (m7GpppG-capped RNA) but is required to stabilize the movement of the N-terminal loop of ncbp-2 and lock the CBC into a high affinity cap-binding state with the cap structure. The sequence is that of Nuclear cap-binding protein subunit 1 (ncbp-1) from Caenorhabditis elegans.